The sequence spans 95 residues: Ribonuclease P protein component 1 (95 aa).

It belongs to the eukaryotic/archaeal RNase P protein component 1 family. Consists of a catalytic RNA component and at least 4 protein subunits. Forms a subcomplex with Rnp4 which stimulates the catalytic RNA.

The protein resides in the cytoplasm. The catalysed reaction is Endonucleolytic cleavage of RNA, removing 5'-extranucleotides from tRNA precursor.. Functionally, part of ribonuclease P, a protein complex that generates mature tRNA molecules by cleaving their 5'-ends. In Methanocaldococcus jannaschii (strain ATCC 43067 / DSM 2661 / JAL-1 / JCM 10045 / NBRC 100440) (Methanococcus jannaschii), this protein is Ribonuclease P protein component 1.